Reading from the N-terminus, the 181-residue chain is Putative manganese efflux pump MntP (181 aa).

The next 6 helical transmembrane spans lie at 3–23, 42–62, 63–83, 101–121, 124–144, and 160–180; these read LIFL…ANGA, IFQA…VGFI, SYID…KMIK, LMLG…TFSF, INIA…CVIA, and LVLG…THLI.

The protein belongs to the MntP (TC 9.B.29) family.

It is found in the cell inner membrane. Probably functions as a manganese efflux pump. This chain is Putative manganese efflux pump MntP, found in Campylobacter fetus subsp. fetus (strain 82-40).